Here is a 320-residue protein sequence, read N- to C-terminus: ATP-dependent 6-phosphofructokinase (320 aa).

Residues G12, 73-74, and 103-106 each bind ATP; these read RF and GDGS. Residue D104 participates in Mg(2+) binding. 126–128 contributes to the substrate binding site; the sequence is TID. The active-site Proton acceptor is D128. Residue R155 participates in ADP binding. Substrate is bound by residues R163 and 170-172; that span reads MGR. ADP is bound by residues 186 to 188 and K212; that span reads GCE. Substrate contacts are provided by residues E223, R244, and 250 to 253; that span reads HIQR.

This sequence belongs to the phosphofructokinase type A (PFKA) family. ATP-dependent PFK group I subfamily. Prokaryotic clade 'B1' sub-subfamily. As to quaternary structure, homotetramer. The cofactor is Mg(2+).

The protein localises to the cytoplasm. The enzyme catalyses beta-D-fructose 6-phosphate + ATP = beta-D-fructose 1,6-bisphosphate + ADP + H(+). It functions in the pathway carbohydrate degradation; glycolysis; D-glyceraldehyde 3-phosphate and glycerone phosphate from D-glucose: step 3/4. Its activity is regulated as follows. Allosterically activated by ADP and other diphosphonucleosides, and allosterically inhibited by phosphoenolpyruvate. Its function is as follows. Catalyzes the phosphorylation of D-fructose 6-phosphate to fructose 1,6-bisphosphate by ATP, the first committing step of glycolysis. The polypeptide is ATP-dependent 6-phosphofructokinase (Buchnera aphidicola subsp. Cinara cedri (strain Cc)).